The chain runs to 515 residues: MVQPYKHEPFTDFTVDANRQAFLAALEKVEAELGREYPLIIGGERVMTEDKITSVNPANKAEVIGRVAKANKELAERAMKTADEAFRTWSRTSPEARADILFRAAAIVRRRKHEFSAWLVKEAGKPWREADADTAEAIDFMEYYGRQMLKLKDGIPVESRPGETNRFFYIPLGVGVVISPWNFPFAIMAGTTVAALVTGNTVLLKPASATPVVAYKFAEVLEEAGLPAGVLNYIPGSGAEVGDYLVEHPRTRFISFTGSRDVGIRIYERAAKVQPGQIWLKRVIAEMGGKDAIVVDKEADLELAAQSIVASAFGFSGQKCSACSRAIIVEDVYDQVLNRVVELTKQLNVGDPAEQATFMGPVIDQGAYNKIMEYIEIGKQEGRLMTGGEGDDSKGFFIQPTVFADVDPNARIMQEEIFGPVVAFAKARDFDHALEIANNTQYGLTGAVISRNRANLEKARHEFHVGNLYFNRGCTGAIVGYQPFGGFNMSGTDSKAGGPDYLILHMQAKTVSEMF.

Residues Glu286 and Cys320 contribute to the active site.

It belongs to the aldehyde dehydrogenase family. RocA subfamily.

It catalyses the reaction L-glutamate 5-semialdehyde + NAD(+) + H2O = L-glutamate + NADH + 2 H(+). It functions in the pathway amino-acid degradation; L-proline degradation into L-glutamate; L-glutamate from L-proline: step 2/2. The polypeptide is 1-pyrroline-5-carboxylate dehydrogenase (Geobacillus thermodenitrificans (strain NG80-2)).